The sequence spans 327 residues: Thiamine-binding periplasmic protein (327 aa).

The N-terminal stretch at 1 to 18 (MLKKCLPLLLLCTAPVFA) is a signal peptide. Thiamine contacts are provided by residues 59 to 60 (DG), 161 to 162 (ST), Trp197, and 215 to 218 (YTTS).

This sequence belongs to the bacterial solute-binding protein 1 family. In terms of assembly, monomer in solution. The complex is composed of two ATP-binding proteins (ThiQ), two transmembrane proteins (ThiP) and a solute-binding protein (ThiB).

The protein localises to the periplasm. Its activity is regulated as follows. Transport is inhibited by the sulfhydryl-specific modifier N-ethylmaleimide. Functionally, part of the ABC transporter complex ThiBPQ involved in thiamine import. Binds thiamine, thiamine phosphate and thiamine diphosphate with high affinity. The chain is Thiamine-binding periplasmic protein (thiB) from Escherichia coli (strain K12).